The following is a 452-amino-acid chain: MKFSIYLIISLFSSFSHAIWLDTNNETTIREDCNIIAKGLLDYYEGTKYGGVIGMFSWPYYWWEAGGAWGSLIDYTFYFDNDTLVPLITDALLYQTGDDDNYIPLNQSTTEGNDDQAFWGIAVMAAAERNFTNPKDPTKAWLTLAQAVFNTMQARWDTETCNGGLRWQIFQWNSGYDYKNSVSNGALFHLAARLARYTGNDSYVVWAERVWDWMYGVGLLTEQNWWFVYDGVKIANNCSNITKYQWSYNQGLMLAGCAYLYNYTEEEKWYNYTIKLLESAQVFFKNISGSMVMYEAACQPSNSCNNDQRSFKAYFSRFLGLTSVLVPQTEPVITKWLVDSANGAAGSCSGGSDGVTCGLSWTDWSQGWDGKWGLGEQMSALEVMQNLMVHKRPAPYTADTGGSSIGNPAAGYGKLTSDATPLSIDGGDKAGAGIITAIIGASLVGSCVWLIL.

The N-terminal stretch at 1 to 18 (MKFSIYLIISLFSSFSHA) is a signal peptide. N-linked (GlcNAc...) asparagine glycans are attached at residues Asn-25, Asn-81, Asn-106, Asn-130, Asn-200, Asn-237, Asn-240, Asn-262, Asn-271, and Asn-286. A lipid anchor (GPI-anchor amidated glycine) is attached at Gly-431. The propeptide at 432 to 452 (AGIITAIIGASLVGSCVWLIL) is removed in mature form.

This sequence belongs to the glycosyl hydrolase 76 family.

The protein resides in the cell membrane. It catalyses the reaction Random hydrolysis of (1-&gt;6)-alpha-D-mannosidic linkages in unbranched (1-&gt;6)-mannans.. Probable mannosidase required for normal synthesis of the cell wall. This chain is Mannan endo-1,6-alpha-mannosidase DCW1 (DCW1), found in Candida albicans (strain SC5314 / ATCC MYA-2876) (Yeast).